Here is a 436-residue protein sequence, read N- to C-terminus: 3-ketoacyl-CoA thiolase (436 aa).

The Acyl-thioester intermediate role is filled by cysteine 99. Active-site proton acceptor residues include histidine 392 and cysteine 422.

The protein belongs to the thiolase-like superfamily. Thiolase family. Heterotetramer of two alpha chains (FadJ) and two beta chains (FadI).

Its subcellular location is the cytoplasm. It catalyses the reaction an acyl-CoA + acetyl-CoA = a 3-oxoacyl-CoA + CoA. It functions in the pathway lipid metabolism; fatty acid beta-oxidation. Functionally, catalyzes the final step of fatty acid oxidation in which acetyl-CoA is released and the CoA ester of a fatty acid two carbons shorter is formed. This Salmonella schwarzengrund (strain CVM19633) protein is 3-ketoacyl-CoA thiolase.